Reading from the N-terminus, the 569-residue chain is MRASGFFISTLKEAPAEAELISHKLMLRAGIIRRLGSGLYTWMPLGLKVLRKVENIVREEMDAAGALELLMPAVQPAELWRETGRWDVFGPQMLKIRDRHERDFCFGPTHEEVITDIARREIKSYRQLPLNFYQIQTKFRDEVRPRFGVMRAREFVMKDAYSFHTDIPSLEETYQAMHVAYCRIFDRLGLKFRPVKADTGAIGGSSSHEFHVLADSGEDAIAFCSDSDYAANVEMAESLPPAGLREAAAGEMQKVRTIAQKTCEEVAAYLNVSIEQTVKTLAVMANGGMHLLLLRGDHHLNETKVRKIPFLSDFRLASEEEIRTETGCLPGFIGPAGLSLPVIADLTVATMSNFVCGANEEDYHLVNVNFGRDLKEPDHVFDIRNVVSGDLSPDGKGKLEICRGIEVGHIFQLLTKYSEAMKANYLDESGQARPMEMGCYGIGVSRIVAAAIEQNHDERGIIFPAAMAPFQVVIIPIGLKKNAEVRAEAEKLYATLSSVGIEVLLDDRDDRPGVMFADMELIGIPHRVVVGERGLKEGNAEYRGRRDEKSEVVPLPEIADFIKSKLAGG.

Belongs to the class-II aminoacyl-tRNA synthetase family. ProS type 1 subfamily. In terms of assembly, homodimer.

Its subcellular location is the cytoplasm. The enzyme catalyses tRNA(Pro) + L-proline + ATP = L-prolyl-tRNA(Pro) + AMP + diphosphate. Catalyzes the attachment of proline to tRNA(Pro) in a two-step reaction: proline is first activated by ATP to form Pro-AMP and then transferred to the acceptor end of tRNA(Pro). As ProRS can inadvertently accommodate and process non-cognate amino acids such as alanine and cysteine, to avoid such errors it has two additional distinct editing activities against alanine. One activity is designated as 'pretransfer' editing and involves the tRNA(Pro)-independent hydrolysis of activated Ala-AMP. The other activity is designated 'posttransfer' editing and involves deacylation of mischarged Ala-tRNA(Pro). The misacylated Cys-tRNA(Pro) is not edited by ProRS. The sequence is that of Proline--tRNA ligase from Nitrosospira multiformis (strain ATCC 25196 / NCIMB 11849 / C 71).